Consider the following 253-residue polypeptide: Imidazole glycerol phosphate synthase subunit HisF (253 aa).

Catalysis depends on residues aspartate 11 and aspartate 130.

The protein belongs to the HisA/HisF family. As to quaternary structure, heterodimer of HisH and HisF.

It is found in the cytoplasm. It catalyses the reaction 5-[(5-phospho-1-deoxy-D-ribulos-1-ylimino)methylamino]-1-(5-phospho-beta-D-ribosyl)imidazole-4-carboxamide + L-glutamine = D-erythro-1-(imidazol-4-yl)glycerol 3-phosphate + 5-amino-1-(5-phospho-beta-D-ribosyl)imidazole-4-carboxamide + L-glutamate + H(+). The protein operates within amino-acid biosynthesis; L-histidine biosynthesis; L-histidine from 5-phospho-alpha-D-ribose 1-diphosphate: step 5/9. IGPS catalyzes the conversion of PRFAR and glutamine to IGP, AICAR and glutamate. The HisF subunit catalyzes the cyclization activity that produces IGP and AICAR from PRFAR using the ammonia provided by the HisH subunit. The chain is Imidazole glycerol phosphate synthase subunit HisF from Clostridium beijerinckii (strain ATCC 51743 / NCIMB 8052) (Clostridium acetobutylicum).